The following is a 428-amino-acid chain: Glutamine synthetase, chloroplastic (428 aa).

Residues 1 to 48 (MAQAVVPAMQCQVGAVRARPAAAAAAAGGRVWGVRRTGRGTSGFRVMA) constitute a chloroplast transit peptide. The GS beta-grasp domain occupies 75–155 (IIAEYIWVGG…VMCDTYTPAG (81 aa)). The disordered stretch occupies residues 95–120 (TISKPVEDPSELPKWNYDGSSTGQAP). The GS catalytic domain occupies 159 to 428 (PTNKRNRAAQ…LAAKKLALKV (270 aa)).

Belongs to the glutamine synthetase family. Homooctamer.

The protein localises to the plastid. It is found in the chloroplast. The catalysed reaction is L-glutamate + NH4(+) + ATP = L-glutamine + ADP + phosphate + H(+). Its function is as follows. Light-modulated chloroplastic glutamine synthetase, encoded by a nuclear gene and expressed primarily in leaves, and which is responsible for the reassimilation of the ammonia generated by photorespiration. The chain is Glutamine synthetase, chloroplastic from Oryza sativa subsp. japonica (Rice).